The following is a 499-amino-acid chain: Lipopolysaccharide core galacturonosyltransferase RgtA (499 aa).

Transmembrane regions (helical) follow at residues 11–31 (TAGL…IVLP), 74–94 (IGAL…FYGL), 103–123 (EALA…SYMA), 125–145 (QDLT…YGFF), 165–185 (IGLI…IAIL), 199–219 (MLAA…WLQG), 248–268 (LLAF…IFAA), 291–311 (MMLA…STTV), 316–336 (LDPF…AAGL), and 351–371 (VLMA…GLIG).

It belongs to the glycosyltransferase 83 family.

The protein localises to the cell inner membrane. The protein operates within bacterial outer membrane biogenesis; LPS core biosynthesis. Functionally, involved in the modification of the lipopolysaccharide (LPS) inner core. Catalyzes the transfer of a galacturonic acid (GalA) residue to the 4-position of the outer Kdo (3-deoxy-D-manno-octulosonic acid) residue of the LPS inner core, using dodecaprenyl phosphate-GalA as the donor substrate. GalA addition by RgtA is required for RgtB activity. The polypeptide is Lipopolysaccharide core galacturonosyltransferase RgtA (Rhizobium johnstonii (strain DSM 114642 / LMG 32736 / 3841) (Rhizobium leguminosarum bv. viciae)).